The sequence spans 284 residues: Pantothenate synthetase (284 aa).

32–39 is an ATP binding site; that stretch reads MGALHDGH. Residue His-39 is the Proton donor of the active site. Gln-63 is a binding site for (R)-pantoate. Gln-63 is a binding site for beta-alanine. An ATP-binding site is contributed by 149–152; the sequence is GEKD. A (R)-pantoate-binding site is contributed by Gln-155. ATP contacts are provided by residues Ile-178 and 186–189; that span reads MSSR.

Belongs to the pantothenate synthetase family. In terms of assembly, homodimer.

Its subcellular location is the cytoplasm. It carries out the reaction (R)-pantoate + beta-alanine + ATP = (R)-pantothenate + AMP + diphosphate + H(+). Its pathway is cofactor biosynthesis; (R)-pantothenate biosynthesis; (R)-pantothenate from (R)-pantoate and beta-alanine: step 1/1. In terms of biological role, catalyzes the condensation of pantoate with beta-alanine in an ATP-dependent reaction via a pantoyl-adenylate intermediate. The chain is Pantothenate synthetase from Roseobacter denitrificans (strain ATCC 33942 / OCh 114) (Erythrobacter sp. (strain OCh 114)).